The primary structure comprises 99 residues: Co-chaperonin GroES (99 aa).

Belongs to the GroES chaperonin family. As to quaternary structure, heptamer of 7 subunits arranged in a ring. Interacts with the chaperonin GroEL.

The protein resides in the cytoplasm. Functionally, together with the chaperonin GroEL, plays an essential role in assisting protein folding. The GroEL-GroES system forms a nano-cage that allows encapsulation of the non-native substrate proteins and provides a physical environment optimized to promote and accelerate protein folding. GroES binds to the apical surface of the GroEL ring, thereby capping the opening of the GroEL channel. This is Co-chaperonin GroES from Methylacidiphilum infernorum (isolate V4) (Methylokorus infernorum (strain V4)).